The primary structure comprises 309 residues: MIDILDVKSRATIQDLGRFGLRRFGISHCGAMDKLALRAGNILLGNAENVPAIEVPLGGITLQFQQDMNFCVTGAFYEMMLDDKPVFAYWRYQVRAGQILKMARAKIGMYGYLCVQGGFVLPQALNSCSTDLRAQIGGIEGRCLQAGDQLQTANDHILRSEIGIAPIPLRDVIRALPSSEYQAFKRKSQYYWWRNEWTLQSNSDRMGYRFQGQTLELKQPLEMLSHAIQFGSVQVPPSGQPIILMADAQTTGGYPKIANVIDADLGALAQVRLGSTIKFEAVSLQEAAKLRRKNEIYLDQIRRIVDEKN.

The protein belongs to the PxpC family. Forms a complex composed of PxpA, PxpB and PxpC.

The catalysed reaction is 5-oxo-L-proline + ATP + 2 H2O = L-glutamate + ADP + phosphate + H(+). Catalyzes the cleavage of 5-oxoproline to form L-glutamate coupled to the hydrolysis of ATP to ADP and inorganic phosphate. The chain is 5-oxoprolinase subunit C from Haemophilus influenzae (strain ATCC 51907 / DSM 11121 / KW20 / Rd).